Consider the following 138-residue polypeptide: Basic phospholipase A2 homolog Ts-K49b (138 aa).

A signal peptide spans 1 to 16 (MRTLWIMAVLLVGVEG). 6 disulfides stabilise this stretch: cysteine 42/cysteine 131, cysteine 44/cysteine 60, cysteine 65/cysteine 138, cysteine 66/cysteine 104, cysteine 73/cysteine 97, and cysteine 91/cysteine 102. Residues 121-133 (KKKKINLKLFCKK) form an important for membrane-damaging activities in eukaryotes and bacteria; heparin-binding region.

As to expression, expressed by the venom gland.

It localises to the secreted. Its function is as follows. Snake venom phospholipase A2 homolog that lacks catalytic activity. It shows myotoxic and weak anticoagulant activities. A model of myotoxic mechanism has been proposed: an apo Lys49-PLA2 is activated by the entrance of a hydrophobic molecule (e.g. fatty acid) at the hydrophobic channel of the protein leading to a reorientation of a monomer. This reorientation causes a transition between 'inactive' to 'active' states, causing alignment of C-terminal and membrane-docking sites (MDoS) side-by-side and putting the membrane-disruption sites (MDiS) in the same plane, exposed to solvent and in a symmetric position for both monomers. The MDoS region stabilizes the toxin on membrane by the interaction of charged residues with phospholipid head groups. Subsequently, the MDiS region destabilizes the membrane with penetration of hydrophobic residues. This insertion causes a disorganization of the membrane, allowing an uncontrolled influx of ions (i.e. calcium and sodium), and eventually triggering irreversible intracellular alterations and cell death. The sequence is that of Basic phospholipase A2 homolog Ts-K49b from Trimeresurus stejnegeri (Chinese green tree viper).